The chain runs to 504 residues: Protein Dok-7 (504 aa).

Residues 4-109 (AALVEGQVKL…WDTRIRYALG (106 aa)) enclose the PH domain. One can recognise an IRS-type PTB domain in the interval 105 to 210 (RYALGEVHRF…RGISPTKGPF (106 aa)). 3 disordered regions span residues 210–232 (FGLRPVLPDPSSGGPSASEERVA), 248–348 (LSHS…HSSY), and 371–483 (SLLS…PHAG). Residues 263–280 (LSSSSSEASHSDISASSR) are compositionally biased toward low complexity. 3 stretches are compositionally biased toward polar residues: residues 285 to 297 (PEQSSSSAGTSQE), 331 to 341 (GRQSSSDSGIA), and 421 to 430 (PASQGSSDHG).

As to quaternary structure, homodimer. Forms a heterotetramer composed of 2 DOK7 and 2 MUSK molecules which facilitates MUSK trans-autophosphorylation on tyrosine residue and activation. Interacts (via IRS-type PTB domain) with MUSK (via cytoplasmic part); requires MUSK phosphorylation.

It is found in the cell membrane. Its subcellular location is the synapse. Its function is as follows. Probable muscle-intrinsic activator of MUSK that plays an essential role in neuromuscular synaptogenesis. Acts in aneural activation of MUSK and subsequent acetylcholine receptor (AchR) clustering in myotubes. Induces autophosphorylation of MUSK. The sequence is that of Protein Dok-7 (Dok7) from Mus musculus (Mouse).